The chain runs to 655 residues: ATP-dependent RNA helicase mss116, mitochondrial (655 aa).

Residues 1 to 56 (MMLGAVRRYGVVHALRASVPRTICRPSNSQLLRCQTSPVTACPQSVRLLHKSSPFF) constitute a mitochondrion transit peptide. Residues 84 to 113 (DLAERGLVDPKIIRAIVKDMNIKTMTDVQS) carry the Q motif motif. Residues 116 to 307 (LREILQGDDV…RKTMKPNFKF (192 aa)) enclose the Helicase ATP-binding domain. 129-136 (AKTGTGKT) serves as a coordination point for ATP. A DEAD box motif is present at residues 251–254 (DEAD). The Helicase C-terminal domain occupies 341-503 (EFVTKYVEGE…TFATATVDMT (163 aa)). The tract at residues 594-642 (YRGSSDNMSTRPDYRGGDRDMWASNSRRGREFNSDRRESRFGNHRNADD) is disordered. 2 stretches are compositionally biased toward basic and acidic residues: residues 605–614 (PDYRGGDRDM) and 621–642 (RGRE…NADD).

This sequence belongs to the DEAD box helicase family. DDX18/HAS1 subfamily.

It localises to the mitochondrion matrix. The catalysed reaction is ATP + H2O = ADP + phosphate + H(+). ATP-dependent RNA helicase required for mitochondrial splicing of group I and II introns. Also required for efficient mitochondrial translation. This Aspergillus fumigatus (strain ATCC MYA-4609 / CBS 101355 / FGSC A1100 / Af293) (Neosartorya fumigata) protein is ATP-dependent RNA helicase mss116, mitochondrial (mss116).